A 95-amino-acid chain; its full sequence is Aspartyl/glutamyl-tRNA(Asn/Gln) amidotransferase subunit C (95 aa).

The protein belongs to the GatC family. In terms of assembly, heterotrimer of A, B and C subunits.

The catalysed reaction is L-glutamyl-tRNA(Gln) + L-glutamine + ATP + H2O = L-glutaminyl-tRNA(Gln) + L-glutamate + ADP + phosphate + H(+). It carries out the reaction L-aspartyl-tRNA(Asn) + L-glutamine + ATP + H2O = L-asparaginyl-tRNA(Asn) + L-glutamate + ADP + phosphate + 2 H(+). Functionally, allows the formation of correctly charged Asn-tRNA(Asn) or Gln-tRNA(Gln) through the transamidation of misacylated Asp-tRNA(Asn) or Glu-tRNA(Gln) in organisms which lack either or both of asparaginyl-tRNA or glutaminyl-tRNA synthetases. The reaction takes place in the presence of glutamine and ATP through an activated phospho-Asp-tRNA(Asn) or phospho-Glu-tRNA(Gln). The sequence is that of Aspartyl/glutamyl-tRNA(Asn/Gln) amidotransferase subunit C from Phenylobacterium zucineum (strain HLK1).